An 815-amino-acid polypeptide reads, in one-letter code: Glycogen phosphorylase (815 aa).

At Lys662 the chain carries N6-(pyridoxal phosphate)lysine.

It belongs to the glycogen phosphorylase family. Pyridoxal 5'-phosphate is required as a cofactor.

It catalyses the reaction [(1-&gt;4)-alpha-D-glucosyl](n) + phosphate = [(1-&gt;4)-alpha-D-glucosyl](n-1) + alpha-D-glucose 1-phosphate. In terms of biological role, phosphorylase is an important allosteric enzyme in carbohydrate metabolism. Enzymes from different sources differ in their regulatory mechanisms and in their natural substrates. However, all known phosphorylases share catalytic and structural properties. This chain is Glycogen phosphorylase (glgP), found in Shigella flexneri.